Reading from the N-terminus, the 655-residue chain is p-hydroxybenzoic acid efflux pump subunit AaeB (655 aa).

Helical transmembrane passes span 13–33 (FAVK…HFQL), 38–58 (WAVL…GGEP), 69–89 (LRII…IAMI), 93–113 (LLMI…SSLV), 121–141 (WGLA…EPLL), 152–172 (EIVI…PRSI), 370–390 (LFWL…IAVV), 407–427 (FIYG…VIIP), 431–451 (QSML…GIEV), 459–479 (MGAL…TFHF), and 482–502 (FLDS…VILL).

This sequence belongs to the aromatic acid exporter ArAE (TC 2.A.85) family.

It is found in the cell inner membrane. Functionally, forms an efflux pump with AaeA. Could function as a metabolic relief valve, allowing to eliminate certain compounds when they accumulate to high levels in the cell. The sequence is that of p-hydroxybenzoic acid efflux pump subunit AaeB from Escherichia coli (strain SMS-3-5 / SECEC).